The primary structure comprises 132 residues: MVDQLQGTWKSVSCDNFENYMKELGVGRASRKLGCLAKPTVTISTDGDLITIKTKSIFKNKEISFKLGEEFEETTPSGRKSKSTVILDNDSLVQVQDWDGKEATICRRLVDGKMVVESAVNNVTCTRTYQRV.

A fatty acid-binding positions include Arg107 and 127 to 129 (RTY).

It belongs to the calycin superfamily. Fatty-acid binding protein (FABP) family. Highly expressed in adult retina and testis.

Its function is as follows. May play a role in lipid transport. This is Fatty acid-binding protein 12 (Fabp12) from Mus musculus (Mouse).